The sequence spans 285 residues: NAD kinase (285 aa).

Aspartate 64 functions as the Proton acceptor in the catalytic mechanism. Residues 64–65, 140–141, arginine 151, arginine 168, aspartate 170, and 181–186 each bind NAD(+); these read DG, ND, and TGYNLS.

The protein belongs to the NAD kinase family. It depends on a divalent metal cation as a cofactor.

The protein localises to the cytoplasm. It catalyses the reaction NAD(+) + ATP = ADP + NADP(+) + H(+). Functionally, involved in the regulation of the intracellular balance of NAD and NADP, and is a key enzyme in the biosynthesis of NADP. Catalyzes specifically the phosphorylation on 2'-hydroxyl of the adenosine moiety of NAD to yield NADP. The polypeptide is NAD kinase (Lachnoclostridium phytofermentans (strain ATCC 700394 / DSM 18823 / ISDg) (Clostridium phytofermentans)).